A 153-amino-acid chain; its full sequence is Ribosome maturation factor RimP (153 aa).

It belongs to the RimP family.

It localises to the cytoplasm. In terms of biological role, required for maturation of 30S ribosomal subunits. The chain is Ribosome maturation factor RimP from Clostridium botulinum (strain Okra / Type B1).